Consider the following 135-residue polypeptide: U-scoloptoxin(22)-Er1a (135 aa).

The N-terminal stretch at 1 to 24 (MAVILKHLAIILLVFVIEIKMGQG) is a signal peptide. Residues 61–135 (PQITFSTDWG…RSPRYLPTII (75 aa)) are disordered. Basic and acidic residues predominate over residues 75 to 127 (SVNEDREAAERERSPQMKRSEHEEQLMAKDEMKRFQEERNPSSDDKIAIDKRS).

Belongs to the scoloptoxin-22 family. Expressed by the venom gland.

The protein localises to the secreted. The sequence is that of U-scoloptoxin(22)-Er1a from Ethmostigmus rubripes (Giant centipede).